We begin with the raw amino-acid sequence, 104 residues long: COX assembly mitochondrial protein 1 (104 aa).

In terms of domain architecture, CHCH spans 10–52 (QKQCADLIRALEECHKSFGKFFGECNTIKYELKACLTKDRNDK). Short sequence motifs (cx9C motif) lie at residues 13-23 (CADLIRALEEC) and 34-44 (CNTIKYELKAC). 2 disulfide bridges follow: Cys13-Cys44 and Cys23-Cys34.

This sequence belongs to the CMC family.

It is found in the mitochondrion inner membrane. Its function is as follows. Required for mitochondrial cytochrome c oxidase (COX) assembly and respiration. The polypeptide is COX assembly mitochondrial protein 1 (cmc1) (Schizosaccharomyces pombe (strain 972 / ATCC 24843) (Fission yeast)).